Reading from the N-terminus, the 235-residue chain is Isoprenyl transferase (235 aa).

Residue Asp-21 is part of the active site. Asp-21 serves as a coordination point for Mg(2+). Substrate contacts are provided by residues 22–25 (GNAR), Trp-26, Lys-34, His-38, and 66–68 (SSE). Residue Asn-69 is the Proton acceptor of the active site. Substrate-binding positions include Trp-70, Arg-72, Arg-183, and 189 to 191 (RIS). Glu-202 is a binding site for Mg(2+).

Belongs to the UPP synthase family. Homodimer. Mg(2+) is required as a cofactor.

Its function is as follows. Catalyzes the condensation of isopentenyl diphosphate (IPP) with allylic pyrophosphates generating different type of terpenoids. The polypeptide is Isoprenyl transferase (Rickettsia felis (strain ATCC VR-1525 / URRWXCal2) (Rickettsia azadi)).